Consider the following 459-residue polypeptide: Argininosuccinate lyase (459 aa).

It belongs to the lyase 1 family. Argininosuccinate lyase subfamily.

It localises to the cytoplasm. The enzyme catalyses 2-(N(omega)-L-arginino)succinate = fumarate + L-arginine. Its pathway is amino-acid biosynthesis; L-arginine biosynthesis; L-arginine from L-ornithine and carbamoyl phosphate: step 3/3. The protein is Argininosuccinate lyase of Geobacillus thermodenitrificans (strain NG80-2).